We begin with the raw amino-acid sequence, 166 residues long: Nucleotide-binding protein Acid_3194 (166 aa).

The protein belongs to the YajQ family.

In terms of biological role, nucleotide-binding protein. This Solibacter usitatus (strain Ellin6076) protein is Nucleotide-binding protein Acid_3194.